The primary structure comprises 347 residues: Ketol-acid reductoisomerase (NADP(+)) (347 aa).

The 180-residue stretch at Thr3–Thr182 folds into the KARI N-terminal Rossmann domain. Residues Tyr26–Gln29, Arg49, Ser53, and Asp83–Gln86 contribute to the NADP(+) site. His108 is a catalytic residue. Gly134 contacts NADP(+). The region spanning Thr183–Ile328 is the KARI C-terminal knotted domain. Residues Asp191, Glu195, Glu227, and Glu231 each coordinate Mg(2+). Residue Ser252 participates in substrate binding.

Belongs to the ketol-acid reductoisomerase family. It depends on Mg(2+) as a cofactor.

It catalyses the reaction (2R)-2,3-dihydroxy-3-methylbutanoate + NADP(+) = (2S)-2-acetolactate + NADPH + H(+). The enzyme catalyses (2R,3R)-2,3-dihydroxy-3-methylpentanoate + NADP(+) = (S)-2-ethyl-2-hydroxy-3-oxobutanoate + NADPH + H(+). Its pathway is amino-acid biosynthesis; L-isoleucine biosynthesis; L-isoleucine from 2-oxobutanoate: step 2/4. It functions in the pathway amino-acid biosynthesis; L-valine biosynthesis; L-valine from pyruvate: step 2/4. Its function is as follows. Involved in the biosynthesis of branched-chain amino acids (BCAA). Catalyzes an alkyl-migration followed by a ketol-acid reduction of (S)-2-acetolactate (S2AL) to yield (R)-2,3-dihydroxy-isovalerate. In the isomerase reaction, S2AL is rearranged via a Mg-dependent methyl migration to produce 3-hydroxy-3-methyl-2-ketobutyrate (HMKB). In the reductase reaction, this 2-ketoacid undergoes a metal-dependent reduction by NADPH to yield (R)-2,3-dihydroxy-isovalerate. The protein is Ketol-acid reductoisomerase (NADP(+)) of Leuconostoc mesenteroides subsp. cremoris.